Reading from the N-terminus, the 248-residue chain is Ubiquinone/menaquinone biosynthesis C-methyltransferase UbiE (248 aa).

S-adenosyl-L-methionine is bound by residues Ser-68 and Asp-92.

It belongs to the class I-like SAM-binding methyltransferase superfamily. MenG/UbiE family.

The enzyme catalyses a 2-demethylmenaquinol + S-adenosyl-L-methionine = a menaquinol + S-adenosyl-L-homocysteine + H(+). The catalysed reaction is a 2-methoxy-6-(all-trans-polyprenyl)benzene-1,4-diol + S-adenosyl-L-methionine = a 5-methoxy-2-methyl-3-(all-trans-polyprenyl)benzene-1,4-diol + S-adenosyl-L-homocysteine + H(+). The protein operates within quinol/quinone metabolism; menaquinone biosynthesis; menaquinol from 1,4-dihydroxy-2-naphthoate: step 2/2. It participates in cofactor biosynthesis; ubiquinone biosynthesis. Functionally, methyltransferase required for the conversion of demethylmenaquinol (DMKH2) to menaquinol (MKH2) and the conversion of 2-polyprenyl-6-methoxy-1,4-benzoquinol (DDMQH2) to 2-polyprenyl-3-methyl-6-methoxy-1,4-benzoquinol (DMQH2). The sequence is that of Ubiquinone/menaquinone biosynthesis C-methyltransferase UbiE from Rickettsia africae (strain ESF-5).